A 138-amino-acid polypeptide reads, in one-letter code: Large ribosomal subunit protein bL17 (138 aa).

It belongs to the bacterial ribosomal protein bL17 family. As to quaternary structure, part of the 50S ribosomal subunit. Contacts protein L32.

The protein is Large ribosomal subunit protein bL17 of Granulibacter bethesdensis (strain ATCC BAA-1260 / CGDNIH1).